Here is a 158-residue protein sequence, read N- to C-terminus: NAD(P)H-quinone oxidoreductase subunit J, chloroplastic (158 aa).

Belongs to the complex I 30 kDa subunit family. In terms of assembly, NDH is composed of at least 16 different subunits, 5 of which are encoded in the nucleus.

The protein localises to the plastid. The protein resides in the chloroplast thylakoid membrane. It catalyses the reaction a plastoquinone + NADH + (n+1) H(+)(in) = a plastoquinol + NAD(+) + n H(+)(out). The enzyme catalyses a plastoquinone + NADPH + (n+1) H(+)(in) = a plastoquinol + NADP(+) + n H(+)(out). Functionally, NDH shuttles electrons from NAD(P)H:plastoquinone, via FMN and iron-sulfur (Fe-S) centers, to quinones in the photosynthetic chain and possibly in a chloroplast respiratory chain. The immediate electron acceptor for the enzyme in this species is believed to be plastoquinone. Couples the redox reaction to proton translocation, and thus conserves the redox energy in a proton gradient. This is NAD(P)H-quinone oxidoreductase subunit J, chloroplastic from Trachelium caeruleum (Blue throatwort).